The primary structure comprises 91 residues: Putative regulatory protein DSY2730 (91 aa).

It belongs to the RemA family.

The chain is Putative regulatory protein DSY2730 from Desulfitobacterium hafniense (strain Y51).